Reading from the N-terminus, the 276-residue chain is Undecaprenyl-diphosphatase 2 (276 aa).

8 helical membrane passes run 4-24 (IEAL…VSSL), 44-64 (DFLP…LIYF), 87-107 (ARLM…GLLL), 114-134 (LFAS…LLLW), 150-170 (LSFA…LPGF), 193-213 (FSFL…IPKL), 225-245 (LLLA…WFLM), and 256-276 (LRPF…FKLV).

This sequence belongs to the UppP family.

It is found in the cell inner membrane. It catalyses the reaction di-trans,octa-cis-undecaprenyl diphosphate + H2O = di-trans,octa-cis-undecaprenyl phosphate + phosphate + H(+). Catalyzes the dephosphorylation of undecaprenyl diphosphate (UPP). Confers resistance to bacitracin. The sequence is that of Undecaprenyl-diphosphatase 2 from Chromobacterium violaceum (strain ATCC 12472 / DSM 30191 / JCM 1249 / CCUG 213 / NBRC 12614 / NCIMB 9131 / NCTC 9757 / MK).